A 710-amino-acid chain; its full sequence is Pentatricopeptide repeat-containing protein At1g02060, chloroplastic (710 aa).

Residues 1–21 (MVSSVPKLHALFVSKSQPVLR) constitute a chloroplast transit peptide. PPR repeat units follow at residues 137-171 (QDRYFNSLIRSYGNAGLFQESVKLFQTMKQMGISP), 172-202 (SVLTFNSLLSILLKRGRTGMAHDLFDEMRRT), 208-242 (DSYTFNTLINGFCKNSMVDEAFRIFKDMELYHCNP), 243-277 (DVVTYNTIIDGLCRAGKVKIAHNVLSGMLKKATDV), 280-314 (NVVSYTTLVRGYCMKQEIDEAVLVFHDMLSRGLKP), 315-351 (NAVTYNTLIKGLSEAHRYDEIKDILIGGNDAFTTFAP), 352-386 (DACTFNILIKAHCDAGHLDAAMKVFQEMLNMKLHP), 387-421 (DSASYSVLIRTLCMRNEFDRAETLFNELFEKEVLL), 429-459 (LAAAYNPMFEYLCANGKTKQAEKVFRQLMKR), 463-497 (DPPSYKTLITGHCREGKFKPAYELLVLMLRREFVP), 498-532 (DLETYELLIDGLLKIGEALLAHDTLQRMLRSSYLP), and 533-567 (VATTFHSVLAELAKRKFANESFCLVTLMLEKRIRQ).

The protein belongs to the PPR family. P subfamily.

Its subcellular location is the plastid. The protein resides in the chloroplast. The chain is Pentatricopeptide repeat-containing protein At1g02060, chloroplastic from Arabidopsis thaliana (Mouse-ear cress).